We begin with the raw amino-acid sequence, 102 residues long: Small ribosomal subunit protein uS10 (102 aa).

Belongs to the universal ribosomal protein uS10 family. In terms of assembly, part of the 30S ribosomal subunit.

Its function is as follows. Involved in the binding of tRNA to the ribosomes. In Thermobifida fusca (strain YX), this protein is Small ribosomal subunit protein uS10.